A 246-amino-acid chain; its full sequence is Adenosylcobinamide-GDP ribazoletransferase (246 aa).

6 helical membrane-spanning segments follow: residues 37-57, 64-84, 100-122, 139-159, 185-205, and 223-243; these read FPAVGLVIGAAVAGAAWAGAL, ALAALIVWVGVTGALHLDGLA, LLAVLADPHVGSFGVVAIVLQLL, ALVLVPFAARIGPLVWTWWLM, LAAAAWFTPALLVTPLLVLWW, and AGIELIETGLLLSVAITGLWI.

This sequence belongs to the CobS family. Mg(2+) serves as cofactor.

Its subcellular location is the cell inner membrane. The catalysed reaction is alpha-ribazole + adenosylcob(III)inamide-GDP = adenosylcob(III)alamin + GMP + H(+). It carries out the reaction alpha-ribazole 5'-phosphate + adenosylcob(III)inamide-GDP = adenosylcob(III)alamin 5'-phosphate + GMP + H(+). Its pathway is cofactor biosynthesis; adenosylcobalamin biosynthesis; adenosylcobalamin from cob(II)yrinate a,c-diamide: step 7/7. Joins adenosylcobinamide-GDP and alpha-ribazole to generate adenosylcobalamin (Ado-cobalamin). Also synthesizes adenosylcobalamin 5'-phosphate from adenosylcobinamide-GDP and alpha-ribazole 5'-phosphate. In Novosphingobium aromaticivorans (strain ATCC 700278 / DSM 12444 / CCUG 56034 / CIP 105152 / NBRC 16084 / F199), this protein is Adenosylcobinamide-GDP ribazoletransferase.